Consider the following 1244-residue polypeptide: Putative late blight resistance protein homolog R1A-4 (1244 aa).

Coiled coils occupy residues 411 to 434 and 526 to 548; these read RYSDSLAFLKNQLQVIQTEFESLQ and PRMNEEIVGFKDVIENLRNQLLN. Positions 527–755 constitute an NB-ARC domain; that stretch reads RMNEEIVGFK…ECWEQVANDL (229 aa). Residue 560 to 567 participates in ATP binding; sequence GMPGLGKT. LRR repeat units lie at residues 978 to 1004, 1079 to 1103, 1127 to 1150, 1153 to 1178, and 1213 to 1237; these read LWNLETLILNRRSVVHKILLPSTVWDM, PIRLEILKLYRSNAFKAIPFCISAP, LKNLEVLKLYYVEFGDHREWKVSN, FPQLKILKLEDVSLMKWIVADDAFPN, and ESVVKSAMNIQETQVEDYQNTNFKL.

Belongs to the disease resistance NB-LRR family.

The protein localises to the cytoplasm. The protein resides in the membrane. Confers resistance to late blight (Phytophthora infestans) races carrying the avirulence gene Avr1. Resistance proteins guard the plant against pathogens that contain an appropriate avirulence protein via an indirect interaction with this avirulence protein. That triggers a defense system including the hypersensitive response, which restricts the pathogen growth. This Solanum demissum (Wild potato) protein is Putative late blight resistance protein homolog R1A-4 (R1A-4).